Consider the following 741-residue polypeptide: Condensin complex subunit 2 (741 aa).

A disordered region spans residues 1–67 (MGPPGPALPA…NDDEKERLQR (67 aa)). Residues serine 15, serine 25, and serine 28 each carry the phosphoserine modification. Threonine 49 carries the post-translational modification Phosphothreonine. Residues serine 70, serine 78, serine 81, serine 87, serine 89, serine 92, serine 96, serine 201, and serine 233 each carry the phosphoserine modification. Positions 361–377 (CGDFPDGSLGDDFDAND) are enriched in acidic residues. The segment at 361-383 (CGDFPDGSLGDDFDANDEPDHTA) is disordered. Serine 432 is subject to Phosphoserine. The disordered stretch occupies residues 447 to 467 (FRPRRKQDAPSQSENKKKSTK). Residue lysine 488 forms a Glycyl lysine isopeptide (Lys-Gly) (interchain with G-Cter in SUMO2) linkage. Phosphoserine is present on serine 496. Threonine 598 and threonine 605 each carry phosphothreonine. Residue lysine 637 is modified to N6-acetyllysine.

Belongs to the CND2 (condensin subunit 2) family. As to quaternary structure, component of the condensin complex, which contains the SMC2 and SMC4 heterodimer, and three non SMC subunits that probably regulate the complex: NCAPH/BRRN1, NCAPD2/CAPD2 and NCAPG. Phosphorylated by CDK1. Its phosphorylation, as well as that of NCAPD2 and NCAPG subunits, activates the condensin complex and is required for chromosome condensation. In terms of tissue distribution, widely expressed at low level. Expressed in proliferating cells.

The protein resides in the nucleus. Its subcellular location is the cytoplasm. It localises to the chromosome. Functionally, regulatory subunit of the condensin complex, a complex required for conversion of interphase chromatin into mitotic-like condense chromosomes. The condensin complex probably introduces positive supercoils into relaxed DNA in the presence of type I topoisomerases and converts nicked DNA into positive knotted forms in the presence of type II topoisomerases. Early in neurogenesis, may play an essential role to ensure accurate mitotic chromosome condensation in neuron stem cells, ultimately affecting neuron pool and cortex size. The polypeptide is Condensin complex subunit 2 (Homo sapiens (Human)).